The following is a 179-amino-acid chain: Protein Syd (179 aa).

The protein belongs to the Syd family.

It is found in the cell inner membrane. Interacts with the SecY protein in vivo. May bind preferentially to an uncomplexed state of SecY, thus functioning either as a chelating agent for excess SecY in the cell or as a regulatory factor that negatively controls the translocase function. This chain is Protein Syd, found in Pseudoalteromonas translucida (strain TAC 125).